Consider the following 384-residue polypeptide: MKRRHWSHPSCGLLLLVAVFCLLLVFRCSQLRHSGDGAAAAAPDGGAGRNDGDDVDERLVELAAVDPAAMAVLQAAKRLLEGNLARAPERHRDVALRGLREWVGKQERFDPGVMSELVELIKRPIDRYNGDGGGGGEGEGRRYASCAVVGNSGILLAAEHGELIDGHELVVRLNNAPAGDGRYARHVGARTGLAFLNSNVLSQCAVPRRGACFCRAYGEGVPILTYMCNAAHFVEHAVCNNASSSSSGAADATAAAPVIVTDPRLDALCARIVKYYSLRRFARETGRPAEEWARRHEEGMFHYSSGMQAVVAAAGVCDRVSVFGFGKDASARHHYHTLQRRELDLHDYEAEYEFYRDLESRPEAIPFLRQRNSGFRLPPVSFYR.

Over 1-5 (MKRRH) the chain is Cytoplasmic. A helical; Signal-anchor for type II membrane protein transmembrane segment spans residues 6–26 (WSHPSCGLLLLVAVFCLLLVF). The Lumenal segment spans residues 27–384 (RCSQLRHSGD…FRLPPVSFYR (358 aa)). Asparagine 241 is a glycosylation site (N-linked (GlcNAc...) asparagine).

Belongs to the glycosyltransferase 29 family.

The protein localises to the golgi apparatus membrane. Its function is as follows. Possesses sialyltransferase-like activity in vitro. Transfers sialic acid to the glycoprotein asialofetuin. The transferred sialic acid is linked to galactose of Gal-beta-1,3-GalNAc through alpha-2,6-linkage. The protein is Sialyltransferase-like protein 3 of Oryza sativa subsp. japonica (Rice).